Reading from the N-terminus, the 396-residue chain is Putative nickel insertion protein (396 aa).

Belongs to the LarC family.

In Methanosarcina mazei (strain ATCC BAA-159 / DSM 3647 / Goe1 / Go1 / JCM 11833 / OCM 88) (Methanosarcina frisia), this protein is Putative nickel insertion protein.